The sequence spans 467 residues: UDP-N-acetylmuramate--L-alanine ligase (467 aa).

112 to 118 (GTHGKTT) lines the ATP pocket.

Belongs to the MurCDEF family.

Its subcellular location is the cytoplasm. The enzyme catalyses UDP-N-acetyl-alpha-D-muramate + L-alanine + ATP = UDP-N-acetyl-alpha-D-muramoyl-L-alanine + ADP + phosphate + H(+). It participates in cell wall biogenesis; peptidoglycan biosynthesis. Cell wall formation. The protein is UDP-N-acetylmuramate--L-alanine ligase of Azoarcus sp. (strain BH72).